Consider the following 105-residue polypeptide: Molt-inhibiting hormone (105 aa).

The signal sequence occupies residues 1–28; sequence MYRLAMRTWLAIVIVVVGTSLLFDTASA. Intrachain disulfides connect Cys-35-Cys-72, Cys-52-Cys-68, and Cys-55-Cys-81.

It belongs to the arthropod CHH/MIH/GIH/VIH hormone family. In terms of tissue distribution, produced by the medulla terminalis X-organ in the eyestalks and transported to the sinus gland where it is stored and released.

The protein localises to the secreted. Functionally, inhibits Y-organs where molting hormone (ecdysteroid) is secreted. A molting cycle is initiated when MIH secretion diminishes or stops. Has little or no hyperglycemic activity. This Penaeus japonicus (Kuruma prawn) protein is Molt-inhibiting hormone.